The sequence spans 46 residues: Protein PsbN (46 aa).

The helical transmembrane segment at Val-10–Phe-30 threads the bilayer.

This sequence belongs to the PsbN family.

The protein resides in the cellular thylakoid membrane. In terms of biological role, may play a role in photosystem I and II biogenesis. In Synechococcus sp. (strain RCC307), this protein is Protein PsbN.